The sequence spans 286 residues: Pantothenate synthetase (286 aa).

30-37 is an ATP binding site; that stretch reads MGNLHRGH. Histidine 37 serves as the catalytic Proton donor. Glutamine 61 is a binding site for (R)-pantoate. Glutamine 61 provides a ligand contact to beta-alanine. Residue 149–152 participates in ATP binding; it reads GEKD. Residue glutamine 155 coordinates (R)-pantoate. Residues valine 178 and 186 to 189 contribute to the ATP site; that span reads LSSR.

This sequence belongs to the pantothenate synthetase family. As to quaternary structure, homodimer.

The protein localises to the cytoplasm. It carries out the reaction (R)-pantoate + beta-alanine + ATP = (R)-pantothenate + AMP + diphosphate + H(+). The protein operates within cofactor biosynthesis; (R)-pantothenate biosynthesis; (R)-pantothenate from (R)-pantoate and beta-alanine: step 1/1. Catalyzes the condensation of pantoate with beta-alanine in an ATP-dependent reaction via a pantoyl-adenylate intermediate. In Nitrosococcus oceani (strain ATCC 19707 / BCRC 17464 / JCM 30415 / NCIMB 11848 / C-107), this protein is Pantothenate synthetase.